Here is a 740-residue protein sequence, read N- to C-terminus: Ribosomal protein S6 kinase alpha-3 (740 aa).

The disordered stretch occupies residues Met1 to Ile38. Polar residues predominate over residues Pro18–Gln27. The Protein kinase 1 domain occupies Phe68–Phe327. ATP contacts are provided by residues Leu74–Val82 and Lys100. The active-site Proton acceptor is Asp193. At Ser227 the chain carries Phosphoserine; by PDPK1. Residues Ser328–Gln397 form the AGC-kinase C-terminal domain. Phosphothreonine is present on Thr365. Phosphoserine is present on residues Ser369 and Ser375. Ser386 is modified (phosphoserine; by autocatalysis and MAPKAPK2). A Phosphoserine modification is found at Ser415. The Protein kinase 2 domain occupies Tyr422–Ile679. ATP-binding positions include Ile428 to Cys436 and Lys451. At Tyr529 the chain carries Phosphotyrosine; by FGFR3. The active-site Proton acceptor is the Asp539. Phosphoserine is present on residues Ser556 and Ser715.

This sequence belongs to the protein kinase superfamily. AGC Ser/Thr protein kinase family. S6 kinase subfamily. In terms of assembly, forms a complex with either MAPK1/ERK2 or MAPK3/ERK1 in quiescent cells. Transiently dissociates following mitogenic stimulation. Interacts with NFATC4, ETV1/ER81 and FGFR1. Mg(2+) serves as cofactor. Activated by phosphorylation at Ser-227 by PDPK1. Autophosphorylated on Ser-386, as part of the activation process. May be phosphorylated at Thr-365 and Ser-369 by MAPK1/ERK2 and MAPK3/ERK1. Can also be activated via phosphorylation at Ser-386 by MAPKAPK2. Post-translationally, N-terminal myristoylation results in an activated kinase in the absence of added growth factors. Expressed in many tissues, highest levels in skeletal muscle.

The protein resides in the nucleus. It is found in the cytoplasm. The enzyme catalyses L-seryl-[protein] + ATP = O-phospho-L-seryl-[protein] + ADP + H(+). The catalysed reaction is L-threonyl-[protein] + ATP = O-phospho-L-threonyl-[protein] + ADP + H(+). With respect to regulation, upon extracellular signal or mitogen stimulation, phosphorylated at Thr-577 in the C-terminal kinase domain (CTKD) by MAPK1/ERK2 and MAPK3/ERK1. The activated CTKD then autophosphorylates Ser-386, allowing binding of PDPK1, which in turn phosphorylates Ser-227 in the N-terminal kinase domain (NTDK) leading to the full activation of the protein and subsequent phosphorylation of the substrates by the NTKD. In terms of biological role, serine/threonine-protein kinase that acts downstream of ERK (MAPK1/ERK2 and MAPK3/ERK1) signaling and mediates mitogenic and stress-induced activation of the transcription factors CREB1, ETV1/ER81 and NR4A1/NUR77, regulates translation through RPS6 and EIF4B phosphorylation, and mediates cellular proliferation, survival, and differentiation by modulating mTOR signaling and repressing pro-apoptotic function of BAD and DAPK1. In fibroblast, is required for EGF-stimulated phosphorylation of CREB1 and histone H3 at 'Ser-10', which results in the subsequent transcriptional activation of several immediate-early genes. In response to mitogenic stimulation (EGF and PMA), phosphorylates and activates NR4A1/NUR77 and ETV1/ER81 transcription factors and the cofactor CREBBP. Upon insulin-derived signal, acts indirectly on the transcription regulation of several genes by phosphorylating GSK3B at 'Ser-9' and inhibiting its activity. Phosphorylates RPS6 in response to serum or EGF via an mTOR-independent mechanism and promotes translation initiation by facilitating assembly of the preinitiation complex. In response to insulin, phosphorylates EIF4B, enhancing EIF4B affinity for the EIF3 complex and stimulating cap-dependent translation. Is involved in the mTOR nutrient-sensing pathway by directly phosphorylating TSC2 at 'Ser-1798', which potently inhibits TSC2 ability to suppress mTOR signaling, and mediates phosphorylation of RPTOR, which regulates mTORC1 activity and may promote rapamycin-sensitive signaling independently of the PI3K/AKT pathway. Mediates cell survival by phosphorylating the pro-apoptotic proteins BAD and DAPK1 and suppressing their pro-apoptotic function. Promotes the survival of hepatic stellate cells by phosphorylating CEBPB in response to the hepatotoxin carbon tetrachloride (CCl4). Is involved in cell cycle regulation by phosphorylating the CDK inhibitor CDKN1B, which promotes CDKN1B association with 14-3-3 proteins and prevents its translocation to the nucleus and inhibition of G1 progression. In LPS-stimulated dendritic cells, is involved in TLR4-induced macropinocytosis, and in myeloma cells, acts as effector of FGFR3-mediated transformation signaling, after direct phosphorylation at Tyr-529 by FGFR3. Negatively regulates EGF-induced MAPK1/3 phosphorylation via phosphorylation of SOS1. Phosphorylates SOS1 at 'Ser-1134' and 'Ser-1161' that create YWHAB and YWHAE binding sites and which contribute to the negative regulation of MAPK1/3 phosphorylation. Phosphorylates EPHA2 at 'Ser-897', the RPS6KA-EPHA2 signaling pathway controls cell migration. Acts as a regulator of osteoblast differentiation by mediating phosphorylation of ATF4, thereby promoting ATF4 transactivation activity. In Homo sapiens (Human), this protein is Ribosomal protein S6 kinase alpha-3 (RPS6KA3).